A 355-amino-acid chain; its full sequence is Protein MGF 360-3L (355 aa).

Residues 60-92 (KLNTALVLAVKENNYDLIVLFTEWGANINYALL) form an ANK repeat.

It belongs to the asfivirus MGF 360 family.

Plays a role in virus cell tropism, and may be required for efficient virus replication in macrophages. The chain is Protein MGF 360-3L from Ornithodoros (relapsing fever ticks).